The following is a 359-amino-acid chain: Cytoplasmic tRNA 2-thiolation protein 2 (359 aa).

It belongs to the CTU2/NCS2 family.

Its subcellular location is the cytoplasm. It functions in the pathway tRNA modification; 5-methoxycarbonylmethyl-2-thiouridine-tRNA biosynthesis. Plays a central role in 2-thiolation of mcm(5)S(2)U at tRNA wobble positions of tRNA(Lys), tRNA(Glu) and tRNA(Gln). May act by forming a heterodimer with NCS6 that ligates sulfur from thiocarboxylated URM1 onto the uridine of tRNAs at wobble position. Prior mcm(5) tRNA modification by the elongator complex is required for 2-thiolation. May also be involved in protein urmylation. This Ajellomyces capsulatus (strain NAm1 / WU24) (Darling's disease fungus) protein is Cytoplasmic tRNA 2-thiolation protein 2.